Consider the following 1059-residue polypeptide: Microtubule-associated protein 1S (1059 aa).

Residues 1–797 (MAAVAGSGAA…SESLPTLSDS (797 aa)) are necessary for the microtubule-organizing center localization. 2 positions are modified to phosphoserine: serine 321 and serine 472. 2 disordered regions span residues 461–733 (PQDL…ASPH) and 751–942 (VPMA…SATP). Composition is skewed to basic and acidic residues over residues 466-486 (GPGR…KREG) and 494-530 (PGQE…KDPK). Polar residues predominate over residues 547–557 (SVPNLKKTNAQ). The residue at position 582 (serine 582) is a Phosphoserine. Positions 591–603 (ASPPSAACGSPAS) are enriched in low complexity. Phosphothreonine is present on threonine 638. Serine 640 bears the Phosphoserine mark. A compositionally biased stretch (basic and acidic residues) spans 642 to 652 (ESHRSPAEGSE). Serine 655 and serine 657 each carry phosphoserine. Residues 666-1059 (PDASPTVTTP…DAFPACKVEF (394 aa)) are necessary for interaction with RASSF1 isoform A and isoform C. The segment covering 670–680 (PTVTTPTVTTP) has biased composition (low complexity). The segment at 714–966 (EAGLSLPLRG…GSSAHLVDEE (253 aa)) is necessary for association with microtubules. A phosphoserine mark is found at serine 731 and serine 759. A compositionally biased stretch (low complexity) spans 759–769 (SPGSSNDSSAR). Residues 783–796 (PPTSVSESLPTLSD) show a composition bias toward polar residues. Phosphoserine is present on serine 809. Residues 825–836 (PDPLKVPPPLPD) are compositionally biased toward pro residues. Composition is skewed to low complexity over residues 873–887 (AAAP…AKTK) and 923–936 (TATR…SSRP). The tract at residues 960 to 1059 (AHLVDEEFFQ…DAFPACKVEF (100 aa)) is necessary for association with actin. The interval 967 to 991 (FFQRVRALCYVISGQDQRKEEGMRA) is necessary for the mitochondrial aggregation and genome destruction.

The protein belongs to the MAP1 family. Heterodimer of a heavy and a light chain. Interacts with microtubules and actin. Both MAP1S heavy and light chains interact with microtubules. MAP1S light chain interacts with actin. Interacts (via C-terminus) with GAN (via Kelch domains). Interacts with ESR1, LRPPRC, RASSF1 isoform A and isoform C, microtubules and VCY2. Interacts with WDR47 (via N-terminus of light chain). As to expression, expressed in neurons (at protein level). Expressed in spermatocytes, spermatids and spermatozoa. Expressed in the cerebral cortex. Highly expressed in testis. Moderately expressed in the brain, colon, heart, kidney, liver, lung, placenta, small intestine, spleen and stomach. Weakly expressed in muscle.

Its subcellular location is the nucleus. It is found in the cytoplasm. The protein localises to the cytosol. The protein resides in the cytoskeleton. It localises to the spindle. Microtubule-associated protein that mediates aggregation of mitochondria resulting in cell death and genomic destruction (MAGD). Plays a role in anchoring the microtubule organizing center to the centrosomes. Binds to DNA. Plays a role in apoptosis. Involved in the formation of microtubule bundles. This chain is Microtubule-associated protein 1S (MAP1S), found in Homo sapiens (Human).